The following is a 953-amino-acid chain: Isoleucine--tRNA ligase (953 aa).

Residues 57–67 (PYANGDIHIGH) carry the 'HIGH' region motif. Position 582 (glutamate 582) interacts with L-isoleucyl-5'-AMP. A 'KMSKS' region motif is present at residues 623–627 (KMSKS). Lysine 626 contacts ATP. Cysteine 916, cysteine 919, cysteine 936, and cysteine 939 together coordinate Zn(2+).

It belongs to the class-I aminoacyl-tRNA synthetase family. IleS type 1 subfamily. As to quaternary structure, monomer. The cofactor is Zn(2+).

The protein localises to the cytoplasm. It catalyses the reaction tRNA(Ile) + L-isoleucine + ATP = L-isoleucyl-tRNA(Ile) + AMP + diphosphate. In terms of biological role, catalyzes the attachment of isoleucine to tRNA(Ile). As IleRS can inadvertently accommodate and process structurally similar amino acids such as valine, to avoid such errors it has two additional distinct tRNA(Ile)-dependent editing activities. One activity is designated as 'pretransfer' editing and involves the hydrolysis of activated Val-AMP. The other activity is designated 'posttransfer' editing and involves deacylation of mischarged Val-tRNA(Ile). The protein is Isoleucine--tRNA ligase of Bordetella pertussis (strain Tohama I / ATCC BAA-589 / NCTC 13251).